Consider the following 179-residue polypeptide: Large ribosomal subunit protein uL5 (179 aa).

This sequence belongs to the universal ribosomal protein uL5 family. As to quaternary structure, part of the 50S ribosomal subunit; part of the 5S rRNA/L5/L18/L25 subcomplex. Contacts the 5S rRNA and the P site tRNA. Forms a bridge to the 30S subunit in the 70S ribosome.

In terms of biological role, this is one of the proteins that bind and probably mediate the attachment of the 5S RNA into the large ribosomal subunit, where it forms part of the central protuberance. In the 70S ribosome it contacts protein S13 of the 30S subunit (bridge B1b), connecting the 2 subunits; this bridge is implicated in subunit movement. Contacts the P site tRNA; the 5S rRNA and some of its associated proteins might help stabilize positioning of ribosome-bound tRNAs. This chain is Large ribosomal subunit protein uL5, found in Rickettsia prowazekii (strain Madrid E).